The sequence spans 202 residues: Imidazoleglycerol-phosphate dehydratase (202 aa).

It belongs to the imidazoleglycerol-phosphate dehydratase family.

Its subcellular location is the cytoplasm. The catalysed reaction is D-erythro-1-(imidazol-4-yl)glycerol 3-phosphate = 3-(imidazol-4-yl)-2-oxopropyl phosphate + H2O. It functions in the pathway amino-acid biosynthesis; L-histidine biosynthesis; L-histidine from 5-phospho-alpha-D-ribose 1-diphosphate: step 6/9. The polypeptide is Imidazoleglycerol-phosphate dehydratase (Rhizobium etli (strain ATCC 51251 / DSM 11541 / JCM 21823 / NBRC 15573 / CFN 42)).